A 129-amino-acid chain; its full sequence is Azurin iso-2 (129 aa).

Residues 1–129 (ASCETTVTSG…MMRGTLKLEE (129 aa)) form the Plastocyanin-like domain. Residues C3 and C26 are joined by a disulfide bond. Cu cation is bound by residues H46, C112, H117, and M121.

It is found in the periplasm. Functionally, this methylothroph organism uses azurin in the oxidation of methylamine. Iso-2 is probably the acceptor of electrons from methylamine dehydrogenase. This chain is Azurin iso-2, found in Methylomonas sp. (strain J).